Here is an 804-residue protein sequence, read N- to C-terminus: Lon protease 2 (804 aa).

Residues 6 to 199 form the Lon N-terminal domain; sequence MPVCPVRGSV…AVLVLLEAEL (194 aa). 362–369 provides a ligand contact to ATP; that stretch reads GPPGVGKT. In terms of domain architecture, Lon proteolytic spans 598–779; that stretch reads EPQVGVATGM…DQVLDLALVG (182 aa). Active-site residues include serine 685 and lysine 728.

The protein belongs to the peptidase S16 family. Homohexamer. Organized in a ring with a central cavity.

It is found in the cytoplasm. It carries out the reaction Hydrolysis of proteins in presence of ATP.. ATP-dependent serine protease that mediates the selective degradation of mutant and abnormal proteins as well as certain short-lived regulatory proteins. Required for cellular homeostasis and for survival from DNA damage and developmental changes induced by stress. Degrades polypeptides processively to yield small peptide fragments that are 5 to 10 amino acids long. Binds to DNA in a double-stranded, site-specific manner. This Thermus thermophilus (strain ATCC BAA-163 / DSM 7039 / HB27) protein is Lon protease 2.